A 318-amino-acid chain; its full sequence is uncharacterized protein (318 aa).

The interval 19 to 63 is disordered; that stretch reads VPPDARHHEPRPGMTDHPDTGNGIGLTGRPPRAIPDPAPRSSHGP. Positions 21–37 are enriched in basic and acidic residues; sequence PDARHHEPRPGMTDHPD. Position 72–79 (72–79) interacts with ATP; it reads QKGGVGKT.

This sequence belongs to the ParA family.

May play a role in septum formation. This is an uncharacterized protein from Mycobacterium tuberculosis (strain CDC 1551 / Oshkosh).